Consider the following 644-residue polypeptide: MPEPHAVLYVTNELSHIVKSGFLPIWRLTGVESLNVLWLENGKYATDVYAYGDVSKWTIRQLRGHGFIFISTHKNIQLADIIKTVDVRIPREVAKSQDMKAFENEIGRRRIRMRKGFGDALRNKLFKMAIEFHGSEAETLNDANPRLHKIYGMPEMPPLYIEYAEIGTRFDDEPTDEKLVSMLDYIVYSAEEVHYVGCGDLRTIMQFKKRSPGRFRRVLWHVYHPIAPESSDPNVIVHNVMVDSKKDILKHMNFLKRVERLFIWDVSSDRSQMDDDEWESTRFAEDRLGEEIAYEMGGAFSSALIKHRIPNSRDEYHCISTYLLPQPGADADMYELRNFMRLKGYSHVDRHMHPDASVMKVVSRDVRKMVELYHGRDRGRFVKNRLFEHLHIVRKNGLLHESDEPRADLFYLTNRCNMGLEPSIYEVMKKSVIATAWVGRAPLYDYDDFALPRSTVMLNGSYHDIRILDGNGAILFLMWKYPDIVKKDLTYDHAWAMNFAVSLKEPIPDPPVPDISLCRFIGLRVESSVLRVRNPTLHETADELKRMGLDLSGHLYVTLMSGAYVTDLFWWFKMILDWSAQSKEQKLRDLKRSAAEVIEWKEQMAERPWHVRNSLIAALREYKRKMGIREGASIDSWLELLRHL.

Belongs to the orbivirus VP4 family.

Its subcellular location is the virion. Its function is as follows. The VP4 protein is one of the five proteins (with VP1, VP3, VP6 and VP7) which form the inner capsid of the virus. This is Core protein VP4 (Segment-4) from Bluetongue virus 2 (isolate USA) (BTV 2).